The chain runs to 742 residues: Ion-translocating oxidoreductase complex subunit C (742 aa).

4Fe-4S ferredoxin-type domains follow at residues 369 to 397 and 407 to 436; these read GEPQ…QQLY and KATT…VQYF. Residues Cys377, Cys380, Cys383, Cys387, Cys416, Cys419, Cys422, and Cys426 each coordinate [4Fe-4S] cluster. Positions 602–719 are disordered; sequence KLEQQQANAE…PEEQVDPRKA (118 aa).

This sequence belongs to the 4Fe4S bacterial-type ferredoxin family. RnfC subfamily. As to quaternary structure, the complex is composed of six subunits: RsxA, RsxB, RsxC, RsxD, RsxE and RsxG. The cofactor is [4Fe-4S] cluster.

The protein resides in the cell inner membrane. Part of a membrane-bound complex that couples electron transfer with translocation of ions across the membrane. Required to maintain the reduced state of SoxR. This is Ion-translocating oxidoreductase complex subunit C from Escherichia coli O6:H1 (strain CFT073 / ATCC 700928 / UPEC).